The following is a 150-amino-acid chain: Ribosome maturation factor RimP (150 aa).

This sequence belongs to the RimP family.

The protein localises to the cytoplasm. Functionally, required for maturation of 30S ribosomal subunits. In Francisella philomiragia subsp. philomiragia (strain ATCC 25017 / CCUG 19701 / FSC 153 / O#319-036), this protein is Ribosome maturation factor RimP.